The primary structure comprises 171 residues: S-ribosylhomocysteine lyase (171 aa).

Fe cation-binding residues include His-54, His-58, and Cys-128.

It belongs to the LuxS family. As to quaternary structure, homodimer. Fe cation serves as cofactor.

The catalysed reaction is S-(5-deoxy-D-ribos-5-yl)-L-homocysteine = (S)-4,5-dihydroxypentane-2,3-dione + L-homocysteine. Involved in the synthesis of autoinducer 2 (AI-2) which is secreted by bacteria and is used to communicate both the cell density and the metabolic potential of the environment. The regulation of gene expression in response to changes in cell density is called quorum sensing. Catalyzes the transformation of S-ribosylhomocysteine (RHC) to homocysteine (HC) and 4,5-dihydroxy-2,3-pentadione (DPD). The polypeptide is S-ribosylhomocysteine lyase (Cronobacter sakazakii (strain ATCC BAA-894) (Enterobacter sakazakii)).